The chain runs to 415 residues: Beta-1,4-glucuronyltransferase 1 (415 aa).

Residues 1 to 8 lie on the Cytoplasmic side of the membrane; the sequence is MQMSYAIR. A helical; Signal-anchor for type II membrane protein transmembrane segment spans residues 9-36; that stretch reads CAFYQLLLAALMLVAMLQLLYLSLLSGL. Over 37–415 the chain is Lumenal; the sequence is HGQEEQEQYF…ARYPNSPHRC (379 aa). N-linked (GlcNAc...) asparagine glycosylation occurs at asparagine 204. Mn(2+) is bound by residues aspartate 227 and aspartate 229. Asparagine 300 carries an N-linked (GlcNAc...) asparagine glycan.

It belongs to the glycosyltransferase 49 family. Interacts with LARGE1 and LARGE2. Mn(2+) is required as a cofactor.

The protein resides in the golgi apparatus membrane. The catalysed reaction is 3-O-[beta-D-Xyl-(1-&gt;4)-Rib-ol-P-Rib-ol-P-3-beta-D-GalNAc-(1-&gt;3)-beta-D-GlcNAc-(1-&gt;4)-(O-6-P-alpha-D-Man)]-Thr-[protein] + UDP-alpha-D-glucuronate = 3-O-[beta-D-GlcA-(1-&gt;3)-beta-D-Xyl-(1-&gt;4)-Rib-ol-P-Rib-ol-P-3-beta-D-GalNAc-(1-&gt;3)-beta-D-GlcNAc-(1-&gt;4)-(O-6-P-alpha-D-Man)]-Thr-[protein] + UDP + H(+). The protein operates within protein modification; protein glycosylation. Beta-1,4-glucuronyltransferase involved in O-mannosylation of alpha-dystroglycan (DAG1). Transfers a glucuronic acid (GlcA) residue onto a xylose (Xyl) acceptor to produce the glucuronyl-beta-1,4-xylose-beta disaccharide primer, which is further elongated by LARGE1, during synthesis of phosphorylated O-mannosyl glycan. Phosphorylated O-mannosyl glycan is a carbohydrate structure present in alpha-dystroglycan (DAG1), which is required for binding laminin G-like domain-containing extracellular proteins with high affinity. Required for axon guidance; via its function in O-mannosylation of alpha-dystroglycan (DAG1). The protein is Beta-1,4-glucuronyltransferase 1 of Mus musculus (Mouse).